The primary structure comprises 159 residues: Small ribosomal subunit protein uS9 (159 aa).

The protein belongs to the universal ribosomal protein uS9 family.

The sequence is that of Small ribosomal subunit protein uS9 from Rickettsia peacockii (strain Rustic).